A 40-amino-acid polypeptide reads, in one-letter code: Photosystem II reaction center protein J (40 aa).

The helical transmembrane segment at isoleucine 8 to phenylalanine 28 threads the bilayer.

Belongs to the PsbJ family. PSII is composed of 1 copy each of membrane proteins PsbA, PsbB, PsbC, PsbD, PsbE, PsbF, PsbH, PsbI, PsbJ, PsbK, PsbL, PsbM, PsbT, PsbX, PsbY, PsbZ, Psb30/Ycf12, peripheral proteins PsbO, CyanoQ (PsbQ), PsbU, PsbV and a large number of cofactors. It forms dimeric complexes.

The protein resides in the cellular thylakoid membrane. Its function is as follows. One of the components of the core complex of photosystem II (PSII). PSII is a light-driven water:plastoquinone oxidoreductase that uses light energy to abstract electrons from H(2)O, generating O(2) and a proton gradient subsequently used for ATP formation. It consists of a core antenna complex that captures photons, and an electron transfer chain that converts photonic excitation into a charge separation. The protein is Photosystem II reaction center protein J of Nostoc sp. (strain PCC 7120 / SAG 25.82 / UTEX 2576).